A 389-amino-acid polypeptide reads, in one-letter code: D-alanyl-D-alanine carboxypeptidase DacF (389 aa).

Positions 1–23 are cleaved as a signal peptide; it reads MKRLLSTLLIGIMLLTFAPSAFA. S64 acts as the Acyl-ester intermediate in catalysis. K67 functions as the Proton acceptor in the catalytic mechanism. S124 is an active-site residue. K230 contacts substrate.

The protein belongs to the peptidase S11 family.

The protein localises to the secreted. The catalysed reaction is Preferential cleavage: (Ac)2-L-Lys-D-Ala-|-D-Ala. Also transpeptidation of peptidyl-alanyl moieties that are N-acyl substituents of D-alanine.. It functions in the pathway cell wall biogenesis; peptidoglycan biosynthesis. Functionally, removes C-terminal D-alanyl residues from sugar-peptide cell wall precursors. The polypeptide is D-alanyl-D-alanine carboxypeptidase DacF (dacF) (Bacillus subtilis (strain 168)).